Here is a 345-residue protein sequence, read N- to C-terminus: Isopentenyl-diphosphate delta-isomerase (345 aa).

Arg14 to Lys15 contributes to the substrate binding site. FMN-binding positions include Ser71, Ser72–Thr74, Ser102, and Asn130. Position 102–104 (Ser102–Arg104) interacts with substrate. Residue Gln165 coordinates substrate. Residue Glu166 coordinates Mg(2+). Residues Lys197, Thr227, Gly277–Lys279, and Ala298–Gly299 contribute to the FMN site.

The protein belongs to the IPP isomerase type 2 family. Homooctamer. Dimer of tetramers. It depends on FMN as a cofactor. NADPH serves as cofactor. Mg(2+) is required as a cofactor.

It localises to the cytoplasm. It catalyses the reaction isopentenyl diphosphate = dimethylallyl diphosphate. Its function is as follows. Involved in the biosynthesis of isoprenoids. Catalyzes the 1,3-allylic rearrangement of the homoallylic substrate isopentenyl (IPP) to its allylic isomer, dimethylallyl diphosphate (DMAPP). In Rickettsia felis (strain ATCC VR-1525 / URRWXCal2) (Rickettsia azadi), this protein is Isopentenyl-diphosphate delta-isomerase.